A 426-amino-acid polypeptide reads, in one-letter code: Serine hydroxymethyltransferase (426 aa).

Residues Leu113 and 117-119 (GHL) each bind (6S)-5,6,7,8-tetrahydrofolate. Lys222 carries the post-translational modification N6-(pyridoxal phosphate)lysine. 363 to 365 (SPF) contributes to the (6S)-5,6,7,8-tetrahydrofolate binding site.

This sequence belongs to the SHMT family. In terms of assembly, homodimer. Requires pyridoxal 5'-phosphate as cofactor.

The protein localises to the cytoplasm. The enzyme catalyses (6R)-5,10-methylene-5,6,7,8-tetrahydrofolate + glycine + H2O = (6S)-5,6,7,8-tetrahydrofolate + L-serine. It functions in the pathway one-carbon metabolism; tetrahydrofolate interconversion. Its pathway is amino-acid biosynthesis; glycine biosynthesis; glycine from L-serine: step 1/1. Functionally, catalyzes the reversible interconversion of serine and glycine with tetrahydrofolate (THF) serving as the one-carbon carrier. This reaction serves as the major source of one-carbon groups required for the biosynthesis of purines, thymidylate, methionine, and other important biomolecules. Also exhibits THF-independent aldolase activity toward beta-hydroxyamino acids, producing glycine and aldehydes, via a retro-aldol mechanism. The chain is Serine hydroxymethyltransferase from Azobacteroides pseudotrichonymphae genomovar. CFP2.